We begin with the raw amino-acid sequence, 112 residues long: Cornifelin homolog (112 aa).

Belongs to the cornifelin family.

The chain is Cornifelin homolog (cnfn) from Danio rerio (Zebrafish).